A 754-amino-acid chain; its full sequence is Glutathione biosynthesis bifunctional protein GshAB (754 aa).

A glutamate--cysteine ligase region spans residues Met1–Ala332. The 259-residue stretch at Lys488–Phe746 folds into the ATP-grasp domain. Position 515 to 573 (Pro515 to Arg573) interacts with ATP. Positions 695, 716, and 718 each coordinate Mg(2+). 3 residues coordinate Mn(2+): Asp695, Glu716, and Asn718.

The protein in the N-terminal section; belongs to the glutamate--cysteine ligase type 1 family. Type 2 subfamily. Monomer. Mg(2+) serves as cofactor. Requires Mn(2+) as cofactor.

It catalyses the reaction L-cysteine + L-glutamate + ATP = gamma-L-glutamyl-L-cysteine + ADP + phosphate + H(+). The enzyme catalyses gamma-L-glutamyl-L-cysteine + glycine + ATP = glutathione + ADP + phosphate + H(+). It functions in the pathway sulfur metabolism; glutathione biosynthesis; glutathione from L-cysteine and L-glutamate: step 1/2. The protein operates within sulfur metabolism; glutathione biosynthesis; glutathione from L-cysteine and L-glutamate: step 2/2. In terms of biological role, synthesizes glutathione from L-glutamate and L-cysteine via gamma-L-glutamyl-L-cysteine. The protein is Glutathione biosynthesis bifunctional protein GshAB of Streptococcus thermophilus (strain ATCC BAA-250 / LMG 18311).